Consider the following 415-residue polypeptide: MAVHNLKDLLAEGVSGRGVLVRSDLNVPLDSDGEQGRITDPGRITASVPTLSALVEAGAKVVVAAHLGRPKNGPDPALSLAPVAAALGEQLGRHVQLASDVVGTDALARAEGLTDGDVLLLENIRFDARETSKDDAERLALARQLAELVGPTGAFVSDGFGVVHRKQASVYDVATLLPHYAGTLVAEEIAVLEQLTGSTKRPYAVVLGGSKVSDKLGVIESLATKADSIVIGGGMCFTFLAAQGFSVGKSLLETEMVDTCRRLLDTYVDVLRLPVDIVAADRFAADAAPQTVPADAIPDDLMGLDIGPGSVKRFTALLSNAETIFWNGPMGVFEFPAFAAGTKGLAEAIAAATGKGAFSVVGGGDSAAAVRALGIPESGFSHISTGGGASLEYLEGKALPGIEVLGRPQPTGGAA.

Substrate-binding positions include 24–26, Arg43, 66–69, Arg125, and Arg165; these read DLN and HLGR. ATP contacts are provided by residues Lys215, Gly303, Glu334, and 363 to 366; that span reads GGDS.

This sequence belongs to the phosphoglycerate kinase family. As to quaternary structure, monomer.

It is found in the cytoplasm. The catalysed reaction is (2R)-3-phosphoglycerate + ATP = (2R)-3-phospho-glyceroyl phosphate + ADP. The protein operates within carbohydrate degradation; glycolysis; pyruvate from D-glyceraldehyde 3-phosphate: step 2/5. The sequence is that of Phosphoglycerate kinase from Mycobacterium avium (strain 104).